We begin with the raw amino-acid sequence, 542 residues long: Putative sodium-dependent excitatory amino acid transporter glt-6 (542 aa).

Over 1–15 (MKSKRRDDIVQFCRE) the chain is Cytoplasmic. A run of 3 helical transmembrane segments spans residues 16–36 (NTLLVMTMFSVFLGVVLGFGL), 55–75 (IFMQVLKMMILPLIFSSLISA), and 93–113 (LYYLSTAVLATILGIFLVTVI). At 114–191 (HPGDPSIKGT…IVKRSIGMTK (78 aa)) the chain is on the extracellular side. N-linked (GlcNAc...) asparagine glycosylation occurs at Asn175. The next 5 membrane-spanning stretches (helical) occupy residues 192–212 (GMNILGIIVFCTGFGIVISQL), 234–254 (VVTLMWFAPLGITCLICGNLL), 265–285 (VLALYVFTVCAGLILHTIITV), 303–323 (GMIQAAVTAFGTASGGATLPM), and 386–406 (TIASIGLGSVPAGLVSILLIL). The segment covering 505-517 (RIGSRIGSRRPSS) has biased composition (low complexity). The disordered stretch occupies residues 505–542 (RIGSRIGSRRPSSTNLHLSWRNNNIEPPYTPLPNDENV). Polar residues predominate over residues 518–529 (TNLHLSWRNNNI).

The protein belongs to the dicarboxylate/amino acid:cation symporter (DAACS) (TC 2.A.23) family.

The protein localises to the membrane. The protein is Putative sodium-dependent excitatory amino acid transporter glt-6 (glt-6) of Caenorhabditis elegans.